The following is a 374-amino-acid chain: Queuine tRNA-ribosyltransferase (374 aa).

Aspartate 92 acts as the Proton acceptor in catalysis. Residues 92–96, aspartate 146, glutamine 193, and glycine 220 contribute to the substrate site; that span reads DSGGY. Residues 251–257 are RNA binding; it reads GVGKPDD. The active-site Nucleophile is the aspartate 270. Residues 275-279 are RNA binding; important for wobble base 34 recognition; that stretch reads TRSGR. Residues cysteine 308, cysteine 310, cysteine 313, and histidine 339 each contribute to the Zn(2+) site.

Belongs to the queuine tRNA-ribosyltransferase family. As to quaternary structure, homodimer. Within each dimer, one monomer is responsible for RNA recognition and catalysis, while the other monomer binds to the replacement base PreQ1. Requires Zn(2+) as cofactor.

It catalyses the reaction 7-aminomethyl-7-carbaguanine + guanosine(34) in tRNA = 7-aminomethyl-7-carbaguanosine(34) in tRNA + guanine. It functions in the pathway tRNA modification; tRNA-queuosine biosynthesis. Functionally, catalyzes the base-exchange of a guanine (G) residue with the queuine precursor 7-aminomethyl-7-deazaguanine (PreQ1) at position 34 (anticodon wobble position) in tRNAs with GU(N) anticodons (tRNA-Asp, -Asn, -His and -Tyr). Catalysis occurs through a double-displacement mechanism. The nucleophile active site attacks the C1' of nucleotide 34 to detach the guanine base from the RNA, forming a covalent enzyme-RNA intermediate. The proton acceptor active site deprotonates the incoming PreQ1, allowing a nucleophilic attack on the C1' of the ribose to form the product. After dissociation, two additional enzymatic reactions on the tRNA convert PreQ1 to queuine (Q), resulting in the hypermodified nucleoside queuosine (7-(((4,5-cis-dihydroxy-2-cyclopenten-1-yl)amino)methyl)-7-deazaguanosine). In Novosphingobium aromaticivorans (strain ATCC 700278 / DSM 12444 / CCUG 56034 / CIP 105152 / NBRC 16084 / F199), this protein is Queuine tRNA-ribosyltransferase.